We begin with the raw amino-acid sequence, 345 residues long: NADPH dehydrogenase (345 aa).

23-26 (SPMC) serves as a coordination point for FMN. Tyr28 is a binding site for substrate. Residues Ala60 and Gln102 each contribute to the FMN site. Residue 164 to 167 (HGAH) coordinates substrate. FMN-binding positions include Arg215 and 307-308 (GR).

Belongs to the NADH:flavin oxidoreductase/NADH oxidase family. NamA subfamily. In terms of assembly, homotetramer. Requires FMN as cofactor.

It catalyses the reaction A + NADPH + H(+) = AH2 + NADP(+). Catalyzes the reduction of the double bond of an array of alpha,beta-unsaturated aldehydes and ketones. It also reduces the nitro group of nitroester and nitroaromatic compounds. It could have a role in detoxification processes. The sequence is that of NADPH dehydrogenase from Bacillus cereus (strain AH820).